Here is a 492-residue protein sequence, read N- to C-terminus: WD repeat-containing protein JIP5 (492 aa).

WD repeat units follow at residues 127 to 166, 178 to 217, 236 to 274, 276 to 317, and 365 to 405; these read RHKGSVRAMCFDSKGDNIFSVGSDNVLKKANTMTGKVVKK, KKNDKFTKLCASQTHPFILIGDESGNIHVINSENLALSNS, RSAYKFISLGQTTLAYFDVRDKDAKPNVAGNEDGKILIS, DQED…LEDQ, and RNHN…VEEN. Composition is skewed to acidic residues over residues 404–414 and 422–433; these read ENASVESDSDE and DLSDDTSSDDET. The disordered stretch occupies residues 404–472; it reads ENASVESDSD…SKSVKKRKIM (69 aa). The span at 449–462 shows a compositional bias: basic and acidic residues; sequence KDLKEDHQEEKESN.

It belongs to the WD repeat WDR55 family. Interacts with BRE1, BUD27 and GIS1.

It is found in the nucleus. Its subcellular location is the nucleolus. This is WD repeat-containing protein JIP5 (JIP5) from Saccharomyces cerevisiae (strain YJM789) (Baker's yeast).